Reading from the N-terminus, the 137-residue chain is uncharacterized protein (137 aa).

This is an uncharacterized protein from Mycoplasma genitalium (strain ATCC 33530 / DSM 19775 / NCTC 10195 / G37) (Mycoplasmoides genitalium).